Consider the following 216-residue polypeptide: MOB kinase activator 3C (216 aa).

Residues Cys-82, Cys-87, His-164, and His-169 each coordinate Zn(2+).

The protein belongs to the MOB1/phocein family.

In terms of biological role, may regulate the activity of kinases. The sequence is that of MOB kinase activator 3C (Mob3c) from Mus musculus (Mouse).